The chain runs to 545 residues: Chaperonin GroEL (545 aa).

Residues 29–32, Lys-50, 86–90, Gly-413, and Asp-495 each bind ATP; these read TLGP and DGTTT.

Belongs to the chaperonin (HSP60) family. As to quaternary structure, forms a cylinder of 14 subunits composed of two heptameric rings stacked back-to-back. Interacts with the co-chaperonin GroES.

The protein resides in the cytoplasm. The catalysed reaction is ATP + H2O + a folded polypeptide = ADP + phosphate + an unfolded polypeptide.. Its function is as follows. Together with its co-chaperonin GroES, plays an essential role in assisting protein folding. The GroEL-GroES system forms a nano-cage that allows encapsulation of the non-native substrate proteins and provides a physical environment optimized to promote and accelerate protein folding. This chain is Chaperonin GroEL, found in Borrelia garinii subsp. bavariensis (strain ATCC BAA-2496 / DSM 23469 / PBi) (Borreliella bavariensis).